The chain runs to 473 residues: Photosystem II CP43 reaction center protein (473 aa).

A propeptide spanning residues 1–14 (MKTLYSLRRFYHVE) is cleaved from the precursor. The residue at position 15 (threonine 15) is an N-acetylthreonine. Threonine 15 carries the phosphothreonine modification. 5 helical membrane-spanning segments follow: residues 69–93 (LFEV…PHLA), 134–155 (LLGP…KDRN), 178–200 (KASY…RKIT), 255–275 (KPFA…LSYS), and 291–312 (WFNN…ASQA). Glutamate 367 is a binding site for [CaMn4O5] cluster. Residues 447–471 (RARAAAAGFEKGIDRDFEPVLSMTP) traverse the membrane as a helical segment.

The protein belongs to the PsbB/PsbC family. PsbC subfamily. As to quaternary structure, PSII is composed of 1 copy each of membrane proteins PsbA, PsbB, PsbC, PsbD, PsbE, PsbF, PsbH, PsbI, PsbJ, PsbK, PsbL, PsbM, PsbT, PsbX, PsbY, PsbZ, Psb30/Ycf12, at least 3 peripheral proteins of the oxygen-evolving complex and a large number of cofactors. It forms dimeric complexes. The cofactor is Binds multiple chlorophylls and provides some of the ligands for the Ca-4Mn-5O cluster of the oxygen-evolving complex. It may also provide a ligand for a Cl- that is required for oxygen evolution. PSII binds additional chlorophylls, carotenoids and specific lipids..

It localises to the plastid. The protein localises to the chloroplast thylakoid membrane. In terms of biological role, one of the components of the core complex of photosystem II (PSII). It binds chlorophyll and helps catalyze the primary light-induced photochemical processes of PSII. PSII is a light-driven water:plastoquinone oxidoreductase, using light energy to abstract electrons from H(2)O, generating O(2) and a proton gradient subsequently used for ATP formation. The sequence is that of Photosystem II CP43 reaction center protein from Cicer arietinum (Chickpea).